The sequence spans 617 residues: Urocanate reductase (617 aa).

FMN phosphoryl threonine is present on threonine 70. Positions 124, 143, 151, 152, 156, 157, and 387 each coordinate FAD. The active-site Proton donor is arginine 446. Histidine 553, glutamate 582, and leucine 598 together coordinate FAD.

Belongs to the FAD-dependent oxidoreductase 2 family. FRD/SDH subfamily. It depends on FAD as a cofactor. Requires FMN as cofactor.

It catalyses the reaction dihydrourocanate + A = urocanate + AH2. Its function is as follows. Catalyzes the two-electron reduction of urocanate to dihydrourocanate (also named imidazole propionate or deamino-histidine). Dihydrourocanate is present at higher concentrations in subjects with type 2 diabetes, and directly impairs glucose tolerance and insulin signaling at the level of insulin receptor substrate (IRS) through activation of p38 gamma (MAPK12)-p62-mTORC1. Therefore, the UrdA enzyme from the gut bacteria L.fermentum strain NBRC 3956 may contribute to the pathogenesis of type 2 diabetes by producing the microbial metabolite dihydrourocanate. This Limosilactobacillus fermentum (strain NBRC 3956 / LMG 18251) (Lactobacillus fermentum) protein is Urocanate reductase.